Consider the following 255-residue polypeptide: 5'-nucleotidase SurE (255 aa).

Residues aspartate 8, aspartate 9, serine 39, and asparagine 91 each contribute to the a divalent metal cation site.

The protein belongs to the SurE nucleotidase family. A divalent metal cation is required as a cofactor.

It localises to the cytoplasm. It catalyses the reaction a ribonucleoside 5'-phosphate + H2O = a ribonucleoside + phosphate. Nucleotidase that shows phosphatase activity on nucleoside 5'-monophosphates. The sequence is that of 5'-nucleotidase SurE from Acinetobacter baumannii (strain SDF).